We begin with the raw amino-acid sequence, 339 residues long: Putative adenosine/adenine deaminase (339 aa).

Positions 16, 18, and 200 each coordinate Zn(2+). Residue histidine 18 participates in substrate binding. The active-site Proton donor is glutamate 203. Aspartate 281 provides a ligand contact to Zn(2+). Aspartate 282 serves as a coordination point for substrate.

The protein belongs to the metallo-dependent hydrolases superfamily. Adenosine and AMP deaminases family. Requires Zn(2+) as cofactor.

Its function is as follows. Putative nucleoside deaminase. May catalyze the hydrolytic deamination of adenosine or some similar substrate and play a role in purine metabolism. The sequence is that of Putative adenosine/adenine deaminase from Streptomyces virginiae (Streptomyces cinnamonensis).